An 86-amino-acid polypeptide reads, in one-letter code: Small ribosomal subunit protein bS20 (86 aa).

It belongs to the bacterial ribosomal protein bS20 family.

In terms of biological role, binds directly to 16S ribosomal RNA. The sequence is that of Small ribosomal subunit protein bS20 from Rhodococcus jostii (strain RHA1).